A 176-amino-acid polypeptide reads, in one-letter code: Transcription factor 21 (176 aa).

Residues 1 to 84 (MSTGSISDVD…QVQRNAANAR (84 aa)) are disordered. Positions 31–44 (GTSNESTEDSSNCE) are enriched in polar residues. Residues 76-128 (VQRNAANARERARMRVLSKAFSRLKTTLPWVPPDTKLSKLDTLRLASSYIAHL) form the bHLH domain.

In terms of assembly, efficient DNA binding requires dimerization with another bHLH protein. Expressed in the cranial paraxial mesoderm from 20 hpf and subsequently becomes restricted to the pharyngeal mesoderm that will form the muscle. Expression in the proepicardial organ is first seen at 40hpf in a cluster of cells between the myocardium and yolk. Also expressed in the developing arches. Expression begins to surround the heart by day 3 of development, and by 96 hpf, expression is restricted to the outer epicardial layer surrounding the myocardium.

The protein localises to the nucleus. Functionally, involved in epithelial-mesenchymal interactions in kidney and lung morphogenesis that include epithelial differentiation and branching morphogenesis. The protein is Transcription factor 21 of Danio rerio (Zebrafish).